The chain runs to 106 residues: UPF0060 membrane protein AZC_0909 (106 aa).

Helical transmembrane passes span 4–24 (PLFA…WHVV), 27–47 (GGSP…AALL), 58–78 (AFAA…WAAE), and 84–104 (RFDA…LFAP).

Belongs to the UPF0060 family.

It localises to the cell inner membrane. This is UPF0060 membrane protein AZC_0909 from Azorhizobium caulinodans (strain ATCC 43989 / DSM 5975 / JCM 20966 / LMG 6465 / NBRC 14845 / NCIMB 13405 / ORS 571).